Here is an 882-residue protein sequence, read N- to C-terminus: Alanine--tRNA ligase (882 aa).

4 residues coordinate Zn(2+): His-570, His-574, Cys-672, and His-676.

Belongs to the class-II aminoacyl-tRNA synthetase family. It depends on Zn(2+) as a cofactor.

It localises to the cytoplasm. The enzyme catalyses tRNA(Ala) + L-alanine + ATP = L-alanyl-tRNA(Ala) + AMP + diphosphate. Its function is as follows. Catalyzes the attachment of alanine to tRNA(Ala) in a two-step reaction: alanine is first activated by ATP to form Ala-AMP and then transferred to the acceptor end of tRNA(Ala). Also edits incorrectly charged Ser-tRNA(Ala) and Gly-tRNA(Ala) via its editing domain. This is Alanine--tRNA ligase from Xanthomonas campestris pv. campestris (strain B100).